The sequence spans 424 residues: Kynureninase (424 aa).

Residues leucine 106, threonine 107, 134-137 (FPSD), aspartate 219, histidine 222, and tyrosine 244 each bind pyridoxal 5'-phosphate. Lysine 245 carries the post-translational modification N6-(pyridoxal phosphate)lysine. Pyridoxal 5'-phosphate contacts are provided by tryptophan 274 and asparagine 302.

The protein belongs to the kynureninase family. As to quaternary structure, homodimer. Requires pyridoxal 5'-phosphate as cofactor.

It catalyses the reaction L-kynurenine + H2O = anthranilate + L-alanine + H(+). The enzyme catalyses 3-hydroxy-L-kynurenine + H2O = 3-hydroxyanthranilate + L-alanine + H(+). It participates in amino-acid degradation; L-kynurenine degradation; L-alanine and anthranilate from L-kynurenine: step 1/1. The protein operates within cofactor biosynthesis; NAD(+) biosynthesis; quinolinate from L-kynurenine: step 2/3. In terms of biological role, catalyzes the cleavage of L-kynurenine (L-Kyn) and L-3-hydroxykynurenine (L-3OHKyn) into anthranilic acid (AA) and 3-hydroxyanthranilic acid (3-OHAA), respectively. The sequence is that of Kynureninase from Xanthomonas campestris pv. campestris (strain B100).